Consider the following 315-residue polypeptide: Olfactory receptor 5M10 (315 aa).

At 1 to 25 (MLSPNHTIVTEFILLGLTDDPVLEK) the chain is on the extracellular side. Residue Asn-5 is glycosylated (N-linked (GlcNAc...) asparagine). A helical transmembrane segment spans residues 26 to 46 (ILFGVFLAIYLITLAGNLCMI). At 47–54 (LLIRTNSQ) the chain is on the cytoplasmic side. Residues 55 to 75 (LQTPMYFFLGHLSFVDICYSS) form a helical membrane-spanning segment. Residues 76–99 (NVTPNMLHNFLSEQKTISYAGCFT) are Extracellular-facing. A disulfide bridge connects residues Cys-97 and Cys-189. A helical transmembrane segment spans residues 100–120 (QCLLFIALVITEFYFLASMAL). The Cytoplasmic portion of the chain corresponds to 121 to 139 (DRYVAICSPLHYSSRMSKN). The chain crosses the membrane as a helical span at residues 140 to 160 (ICISLVTVPYMYGFLNGLSQT). At 161–196 (LLTFHLSFCGSLEINHFYCADPPLIMLACSDTRVKK) the chain is on the extracellular side. A helical transmembrane segment spans residues 197–217 (MAMFVVAGFTLSSSLFIILLS). At 218 to 237 (YLFIFAAIFRIRSAEGRHKA) the chain is on the cytoplasmic side. The helical transmembrane segment at 238–258 (FSTCASHLTIVTLFYGTLFCM) threads the bilayer. The Extracellular segment spans residues 259 to 271 (YVRPPSEKSVEES). The chain crosses the membrane as a helical span at residues 272–292 (KIIAVFYTFLSPMLNPLIYSL). Residues 293 to 315 (RNRDVILAIQQMIRGKSFCKIAV) are Cytoplasmic-facing.

It belongs to the G-protein coupled receptor 1 family.

It is found in the cell membrane. Its function is as follows. Odorant receptor. The protein is Olfactory receptor 5M10 (OR5M10) of Homo sapiens (Human).